A 690-amino-acid chain; its full sequence is Highly divergent homeobox (690 aa).

Positions 3 to 63 (LRSVFTVEQQ…NKRRKMSSKN (61 aa)) form a DNA-binding region, homeobox 1. Disordered regions lie at residues 55–76 (KRRK…TSLS) and 112–132 (SPAS…QITE). The segment covering 64 to 76 (SESGTATTGTSLS) has biased composition (low complexity). Polar residues predominate over residues 113 to 123 (PASSSSRQGTN). Glycyl lysine isopeptide (Lys-Gly) (interchain with G-Cter in SUMO2) cross-links involve residues lysine 135, lysine 140, lysine 144, lysine 163, lysine 172, lysine 194, lysine 212, lysine 221, and lysine 232. A DNA-binding region (homeobox 2) is located at residues 435 to 498 (ALQDRTQFSD…NRRRKYRLMG (64 aa)). The interval 501–539 (VPPPRGGPADFSEQPESGSLSALTPGEEAGPEVGEDNDR) is disordered. Lysine 613 participates in a covalent cross-link: Glycyl lysine isopeptide (Lys-Gly) (interchain with G-Cter in SUMO2). The tract at residues 664–690 (FNHASLEPDDTSFSVSSLSEKNVSESL) is disordered. Residues 674–690 (TSFSVSSLSEKNVSESL) show a composition bias toward polar residues.

The protein localises to the nucleus. This chain is Highly divergent homeobox (HDX), found in Homo sapiens (Human).